The sequence spans 342 residues: UDP-3-O-(3-hydroxymyristoyl)glucosamine N-acyltransferase (342 aa).

The active-site Proton acceptor is the H239.

It belongs to the transferase hexapeptide repeat family. LpxD subfamily. Homotrimer.

The catalysed reaction is a UDP-3-O-[(3R)-3-hydroxyacyl]-alpha-D-glucosamine + a (3R)-hydroxyacyl-[ACP] = a UDP-2-N,3-O-bis[(3R)-3-hydroxyacyl]-alpha-D-glucosamine + holo-[ACP] + H(+). It carries out the reaction UDP-3-O-[(3R)-3-hydroxytetradecanoyl]-alpha-D-glucosamine + (3R)-hydroxytetradecanoyl-[ACP] = UDP-2-N,3-O-bis[(3R)-3-hydroxytetradecanoyl]-alpha-D-glucosamine + holo-[ACP] + H(+). It functions in the pathway glycolipid biosynthesis; lipid IV(A) biosynthesis; lipid IV(A) from (3R)-3-hydroxytetradecanoyl-[acyl-carrier-protein] and UDP-N-acetyl-alpha-D-glucosamine: step 3/6. Catalyzes the N-acylation of UDP-3-O-(hydroxytetradecanoyl)glucosamine using 3-hydroxytetradecanoyl-ACP as the acyl donor. Is involved in the biosynthesis of lipid A, a phosphorylated glycolipid that anchors the lipopolysaccharide to the outer membrane of the cell. This Photorhabdus laumondii subsp. laumondii (strain DSM 15139 / CIP 105565 / TT01) (Photorhabdus luminescens subsp. laumondii) protein is UDP-3-O-(3-hydroxymyristoyl)glucosamine N-acyltransferase.